Here is a 419-residue protein sequence, read N- to C-terminus: 3-isopropylmalate dehydratase large subunit (419 aa).

Cysteine 300, cysteine 360, and cysteine 363 together coordinate [4Fe-4S] cluster.

This sequence belongs to the aconitase/IPM isomerase family. LeuC type 2 subfamily. Heterodimer of LeuC and LeuD. It depends on [4Fe-4S] cluster as a cofactor.

It catalyses the reaction (2R,3S)-3-isopropylmalate = (2S)-2-isopropylmalate. Its pathway is amino-acid biosynthesis; L-leucine biosynthesis; L-leucine from 3-methyl-2-oxobutanoate: step 2/4. Catalyzes the isomerization between 2-isopropylmalate and 3-isopropylmalate, via the formation of 2-isopropylmaleate. In Clostridium botulinum (strain Alaska E43 / Type E3), this protein is 3-isopropylmalate dehydratase large subunit.